Here is a 372-residue protein sequence, read N- to C-terminus: 3-isopropylmalate dehydrogenase (372 aa).

Position 79–90 (79–90) interacts with NAD(+); it reads GPKWQGGAVRPE. Substrate contacts are provided by arginine 97, arginine 107, arginine 136, and aspartate 225. Aspartate 225, aspartate 250, and aspartate 254 together coordinate Mg(2+). 289-300 is an NAD(+) binding site; sequence GSAPDLPAGKAN.

The protein belongs to the isocitrate and isopropylmalate dehydrogenases family. In terms of assembly, homodimer. It depends on Mg(2+) as a cofactor. Mn(2+) serves as cofactor.

The protein localises to the cytoplasm. The catalysed reaction is (2R,3S)-3-isopropylmalate + NAD(+) = 4-methyl-2-oxopentanoate + CO2 + NADH. It functions in the pathway amino-acid biosynthesis; L-leucine biosynthesis; L-leucine from 3-methyl-2-oxobutanoate: step 3/4. Catalyzes the oxidation of 3-carboxy-2-hydroxy-4-methylpentanoate (3-isopropylmalate) to 3-carboxy-4-methyl-2-oxopentanoate. The product decarboxylates to 4-methyl-2 oxopentanoate. In Eremothecium gossypii (strain ATCC 10895 / CBS 109.51 / FGSC 9923 / NRRL Y-1056) (Yeast), this protein is 3-isopropylmalate dehydrogenase (LEU2).